The chain runs to 216 residues: Large ribosomal subunit protein uL3 (216 aa).

A disordered region spans residues 137–157 (GASHGAHKNHRKPGSIGGAST).

It belongs to the universal ribosomal protein uL3 family. In terms of assembly, part of the 50S ribosomal subunit. Forms a cluster with proteins L14 and L19.

Functionally, one of the primary rRNA binding proteins, it binds directly near the 3'-end of the 23S rRNA, where it nucleates assembly of the 50S subunit. The protein is Large ribosomal subunit protein uL3 of Paenarthrobacter aurescens (strain TC1).